We begin with the raw amino-acid sequence, 370 residues long: MQQDKVNLLGLNQKAIEDFFISIGEKKFHARQVFKWIHKKGVIDFDAMTDLGKNLRHKLKEKAQITIPKVVFSKASKDGTHKWLIDVGGSAVETVFILAEGRGTLCVSSQVGCTLNCSFCSTGKQGFNRNLSAAEVIAQLWIAARTLSKTDGEHDFTVTNIVMMGMGEPLMNFENVVPAMDIMMDDLAYGLSRRKVTLSTSGVVPRIYDLLEQSGVSLAVSLHAPNDMLRNEIVPINKKYNIDELLEACKLYAQKGPHKHITFEYTLIEEVNDNLSDAEELVALLKSREVPAKINLIPFNPYPGTPYKKPSNNRIHRFKEFLQHNGFVTTVRKTRGDDIDAACGQLAGDVMDKTNRKQRYLKKLGDTNAN.

Catalysis depends on E93, which acts as the Proton acceptor. Residues 99–337 form the Radical SAM core domain; the sequence is AEGRGTLCVS…VTTVRKTRGD (239 aa). A disulfide bridge links C106 with C343. [4Fe-4S] cluster contacts are provided by C113, C117, and C120. Residues 167 to 168, S199, 221 to 223, and N300 each bind S-adenosyl-L-methionine; these read GE and SLH. C343 acts as the S-methylcysteine intermediate in catalysis.

The protein belongs to the radical SAM superfamily. RlmN family. [4Fe-4S] cluster is required as a cofactor.

It is found in the cytoplasm. It catalyses the reaction adenosine(2503) in 23S rRNA + 2 reduced [2Fe-2S]-[ferredoxin] + 2 S-adenosyl-L-methionine = 2-methyladenosine(2503) in 23S rRNA + 5'-deoxyadenosine + L-methionine + 2 oxidized [2Fe-2S]-[ferredoxin] + S-adenosyl-L-homocysteine. The catalysed reaction is adenosine(37) in tRNA + 2 reduced [2Fe-2S]-[ferredoxin] + 2 S-adenosyl-L-methionine = 2-methyladenosine(37) in tRNA + 5'-deoxyadenosine + L-methionine + 2 oxidized [2Fe-2S]-[ferredoxin] + S-adenosyl-L-homocysteine. Its function is as follows. Specifically methylates position 2 of adenine 2503 in 23S rRNA and position 2 of adenine 37 in tRNAs. m2A2503 modification seems to play a crucial role in the proofreading step occurring at the peptidyl transferase center and thus would serve to optimize ribosomal fidelity. This chain is Dual-specificity RNA methyltransferase RlmN, found in Francisella tularensis subsp. tularensis (strain FSC 198).